We begin with the raw amino-acid sequence, 164 residues long: Thioredoxin domain-containing protein R443 (164 aa).

The helical transmembrane segment at 8 to 28 threads the bilayer; sequence HIVLIVLAIILILWIISLLLC. The region spanning 36-163 is the Thioredoxin domain; it reads YQVPIIQPMQ…LTQFIRSNMN (128 aa). Cys84 and Cys87 form a disulfide bridge.

The protein belongs to the thioredoxin family.

The protein localises to the host membrane. The protein resides in the virion. The polypeptide is Thioredoxin domain-containing protein R443 (Acanthamoeba polyphaga mimivirus (APMV)).